A 23-amino-acid chain; its full sequence is ENFSGGCIPGYMRTADGRCKPTY.

A disulfide bridge connects residues C7 and C19.

The protein belongs to the GBP/PSP1/paralytic peptide family. In terms of tissue distribution, hemolymph.

In terms of biological role, causes rapid, rigid paralysis when injected into Lepidopteran larvae. The physiological role may be to reduce hemolymph loss following injury and promote wound healing. The protein is Paralytic peptide 1 of Heliothis virescens (Tobacco budworm moth).